We begin with the raw amino-acid sequence, 317 residues long: NF-kappa-B inhibitor alpha (317 aa).

A disordered region spans residues 1–39; it reads MFQAAERPQEWAMEGPRDGLKKERLLDDRHDSGLDSMKD. Residues 15–39 are compositionally biased toward basic and acidic residues; sequence GPRDGLKKERLLDDRHDSGLDSMKD. Residue K21 forms a Glycyl lysine isopeptide (Lys-Gly) (interchain with G-Cter in SUMO); alternate linkage. Residue K21 forms a Glycyl lysine isopeptide (Lys-Gly) (interchain with G-Cter in ubiquitin); alternate linkage. K22 participates in a covalent cross-link: Glycyl lysine isopeptide (Lys-Gly) (interchain with G-Cter in ubiquitin). Residues 30 to 36 carry the Destruction motif motif; that stretch reads HDSGLDS. Residue S32 is modified to Phosphoserine; by IKKA and IKKE. S36 is subject to Phosphoserine; by IKKA, IKKB, IKKE and TBK1. The residue at position 42 (Y42) is a Phosphotyrosine; by Tyr-kinases. Positions 45–54 match the Nuclear export signal motif; it reads MVKELQEIRL. ANK repeat units lie at residues 73 to 103, 110 to 139, 143 to 172, 182 to 211, and 216 to 245; these read DGDSFLHLAIIHEEKALTMEVIRQVKGDLAF, LQQTPLHLAVITNQPEIAEALLGAGCDPEL, RGNTPLHLACEQGCLASVGVLTQSCTTPHL, NGHTCLHLASIHGYLGIVELLVSLGADVNA, and NGRTALHLAVDLQNPDLVSLLLKCGADVNR. A Nuclear import signal motif is present at residues 110–120; the sequence is LQQTPLHLAVI. Residues N210 and N244 each carry the (3S)-3-hydroxyasparagine; by HIF1AN; partial modification. Residues S283 and S288 each carry the phosphoserine; by CK2 modification. The residue at position 291 (T291) is a Phosphothreonine; by CK2. The residue at position 293 (S293) is a Phosphoserine; by CK2. T299 carries the post-translational modification Phosphothreonine; by CK2.

Belongs to the NF-kappa-B inhibitor family. Interacts with RELA; the interaction requires the nuclear import signal. Part of a 70-90 kDa complex at least consisting of CHUK, IKBKB, NFKBIA, RELA, ELP1 and MAP3K14. Interacts with NKIRAS1 and NKIRAS2. Interacts with isoform 1 and isoform 2 of RWDD3; the interaction enhances sumoylation. Interacts with PRMT2. Interacts with PRKACA in platelets; this interaction is disrupted by thrombin and collagen. Interacts with MEFV. Interacts with DDRGK1; positively regulates NFKBIA phosphorylation and degradation. Interacts with HNRNPA2B1; the interaction may be mediated by the RRM2 domain of HNRNPA2B1, and HNRNPA2B1 may interact simultaneously with FAM76B and either NFKBIA or NFKBIE to form a complex. In terms of assembly, (Microbial infection) Interacts with HBV protein X. Phosphorylated at Ser-32 and Ser-36 by IKKA/CHUK and IKKB/IKBKB; disables inhibition of NF-kappa-B DNA-binding activity. Phosphorylation at positions 32 and 36 is prerequisite to recognition by the SCF(FBXW11) and SCF(BTRC) complexes, leading to polyubiquitination and subsequent degradation. Phosphorylated at Ser-32 in response to FK506 treatment: phosphorylation is independent of IKKA/CHUK and IKKB/IKBKB and promotes NFKBIA degradation, followed by NF-kappa-B activation. Phosphorylated at Tyr-42: its effect is however unclear. According to a report, phosphorylation at Tyr-42 activates NF-kappa-B without triggering proteolytic degradation of NFKBIA. According to another publication, phosphorylation at Tyr-42 inhibits NF-kappa-B activity by preventing phosphorylation at Ser-32 and Ser-36 and subsequent ubiquitination and degradation. In terms of processing, polyubiquitinated at Lys-21 and/or Lys-22 following phosphorylation at Ser-32 and Ser-36. Monoubiquitinated at Lys-21 and/or Lys-22 by UBE2D3. Ubiquitin chain elongation is then performed by CDC34 in cooperation with the SCF(FBXW11) E3 ligase complex, building ubiquitin chains from the UBE2D3-primed NFKBIA-linked ubiquitin. The resulting polyubiquitination leads to protein degradation. Also ubiquitinated by the SCF(BTRC) complex following stimulus-dependent phosphorylation at Ser-32 and Ser-36. Deubiquitinated by USP38, leading to NF-kappa-B inhibition. Post-translationally, sumoylated; sumoylation requires the presence of the nuclear import signal. Sumoylation blocks ubiquitination and proteasome-mediated degradation of the protein thereby increasing the protein stability. Hydroxylated by HIF1AN. In terms of processing, (Microbial infection) Deubiquitinated by porcine reproductive and respiratory syndrome virus Nsp2 protein, which thereby interferes with NFKBIA degradation and impairs subsequent NF-kappa-B activation.

It is found in the cytoplasm. The protein localises to the nucleus. In terms of biological role, inhibits the activity of dimeric NF-kappa-B/REL complexes by trapping REL (RELA/p65 and NFKB1/p50) dimers in the cytoplasm by masking their nuclear localization signals. On cellular stimulation by immune and pro-inflammatory responses, becomes phosphorylated promoting ubiquitination and degradation, enabling the dimeric RELA to translocate to the nucleus and activate transcription. The polypeptide is NF-kappa-B inhibitor alpha (NFKBIA) (Homo sapiens (Human)).